The chain runs to 188 residues: GMP synthase [glutamine-hydrolyzing] subunit A (188 aa).

A Glutamine amidotransferase type-1 domain is found at 3–188 (PLYVVNNYGQ…FSICTGQNKG (186 aa)). Catalysis depends on C75, which acts as the Nucleophile. Active-site residues include H162 and E164.

In terms of assembly, heterodimer composed of a glutamine amidotransferase subunit (A) and a GMP-binding subunit (B).

It catalyses the reaction XMP + L-glutamine + ATP + H2O = GMP + L-glutamate + AMP + diphosphate + 2 H(+). Its pathway is purine metabolism; GMP biosynthesis; GMP from XMP (L-Gln route): step 1/1. Catalyzes the synthesis of GMP from XMP. The sequence is that of GMP synthase [glutamine-hydrolyzing] subunit A from Methanospirillum hungatei JF-1 (strain ATCC 27890 / DSM 864 / NBRC 100397 / JF-1).